A 399-amino-acid polypeptide reads, in one-letter code: L-asparaginase-like protein GE13669 (399 aa).

A signal peptide spans 1–22 (MLAQSCCLRLLILLLLFKSTCS). Disulfide bonds link C90–C95, C189–C205, and C344–C371.

Belongs to the Ntn-hydrolase family.

The sequence is that of L-asparaginase-like protein GE13669 from Drosophila yakuba (Fruit fly).